We begin with the raw amino-acid sequence, 133 residues long: Protein archease (133 aa).

Ca(2+) is bound by residues aspartate 11, aspartate 132, and leucine 133.

The protein belongs to the archease family.

Activates the tRNA-splicing ligase complex by facilitating the enzymatic turnover of catalytic subunit RtcB. Acts by promoting the guanylylation of RtcB, a key intermediate step in tRNA ligation. Can also alter the NTP specificity of RtcB such that ATP, dGTP or ITP is used efficiently. The protein is Protein archease of Thermoplasma volcanium (strain ATCC 51530 / DSM 4299 / JCM 9571 / NBRC 15438 / GSS1).